Reading from the N-terminus, the 117-residue chain is Holo-[acyl-carrier-protein] synthase (117 aa).

Positions 8 and 58 each coordinate Mg(2+).

It belongs to the P-Pant transferase superfamily. AcpS family. Mg(2+) serves as cofactor.

The protein localises to the cytoplasm. The enzyme catalyses apo-[ACP] + CoA = holo-[ACP] + adenosine 3',5'-bisphosphate + H(+). In terms of biological role, transfers the 4'-phosphopantetheine moiety from coenzyme A to a Ser of acyl-carrier-protein. The polypeptide is Holo-[acyl-carrier-protein] synthase (Enterococcus faecalis (strain ATCC 700802 / V583)).